The primary structure comprises 208 residues: Large ribosomal subunit protein uL4 (208 aa).

Residues 44–76 (RRQGTQSTKTKSEVRGGGRKPWRQKGTGRARHG) are disordered. Over residues 60-76 (GGRKPWRQKGTGRARHG) the composition is skewed to basic residues.

Belongs to the universal ribosomal protein uL4 family. As to quaternary structure, part of the 50S ribosomal subunit.

Functionally, one of the primary rRNA binding proteins, this protein initially binds near the 5'-end of the 23S rRNA. It is important during the early stages of 50S assembly. It makes multiple contacts with different domains of the 23S rRNA in the assembled 50S subunit and ribosome. In terms of biological role, forms part of the polypeptide exit tunnel. The protein is Large ribosomal subunit protein uL4 of Acetivibrio thermocellus (strain ATCC 27405 / DSM 1237 / JCM 9322 / NBRC 103400 / NCIMB 10682 / NRRL B-4536 / VPI 7372) (Clostridium thermocellum).